We begin with the raw amino-acid sequence, 269 residues long: 5'-nucleotidase SurE (269 aa).

Residues D11, D12, S43, and N101 each coordinate a divalent metal cation.

The protein belongs to the SurE nucleotidase family. It depends on a divalent metal cation as a cofactor.

Its subcellular location is the cytoplasm. It catalyses the reaction a ribonucleoside 5'-phosphate + H2O = a ribonucleoside + phosphate. In terms of biological role, nucleotidase that shows phosphatase activity on nucleoside 5'-monophosphates. In Prochlorococcus marinus subsp. pastoris (strain CCMP1986 / NIES-2087 / MED4), this protein is 5'-nucleotidase SurE.